We begin with the raw amino-acid sequence, 554 residues long: Glucose-6-phosphate isomerase (554 aa).

The active-site Proton donor is the Glu359. Residues His390 and Lys518 contribute to the active site.

Belongs to the GPI family.

Its subcellular location is the cytoplasm. The enzyme catalyses alpha-D-glucose 6-phosphate = beta-D-fructose 6-phosphate. Its pathway is carbohydrate biosynthesis; gluconeogenesis. It functions in the pathway carbohydrate degradation; glycolysis; D-glyceraldehyde 3-phosphate and glycerone phosphate from D-glucose: step 2/4. Catalyzes the reversible isomerization of glucose-6-phosphate to fructose-6-phosphate. The polypeptide is Glucose-6-phosphate isomerase (Pseudomonas syringae pv. syringae (strain B728a)).